Reading from the N-terminus, the 179-residue chain is Large ribosomal subunit protein uL5 (179 aa).

This sequence belongs to the universal ribosomal protein uL5 family. In terms of assembly, part of the 50S ribosomal subunit; part of the 5S rRNA/L5/L18/L25 subcomplex. Contacts the 5S rRNA and the P site tRNA. Forms a bridge to the 30S subunit in the 70S ribosome.

Functionally, this is one of the proteins that bind and probably mediate the attachment of the 5S RNA into the large ribosomal subunit, where it forms part of the central protuberance. In the 70S ribosome it contacts protein S13 of the 30S subunit (bridge B1b), connecting the 2 subunits; this bridge is implicated in subunit movement. Contacts the P site tRNA; the 5S rRNA and some of its associated proteins might help stabilize positioning of ribosome-bound tRNAs. The polypeptide is Large ribosomal subunit protein uL5 (Stutzerimonas stutzeri (strain A1501) (Pseudomonas stutzeri)).